The sequence spans 84 residues: Mu-conotoxin-like Cal 12.2b (84 aa).

A signal peptide spans 1 to 19 (MKLTCVLVVLLLVLPFGDL). A propeptide spanning residues 20 to 42 (ITTSNTEDNKRGATPWQNSLKAR) is cleaved from the precursor. Intrachain disulfides connect cysteine 45-cysteine 57, cysteine 52-cysteine 65, cysteine 59-cysteine 70, and cysteine 64-cysteine 76. A 6'-bromotryptophan modification is found at tryptophan 72. Proline 77 carries the 4-hydroxyproline modification. Tryptophan 81 bears the 6'-bromotryptophan mark.

It belongs to the conotoxin O1 superfamily. Expressed by the venom duct.

The protein resides in the secreted. Its function is as follows. Mu-conotoxins block voltage-gated sodium channels. This toxin reversibly blocks voltage-gated sodium channel in cephalopods, with no alteration in the voltage dependence of sodium conductance or on the kinetics of inactivation. The sequence is that of Mu-conotoxin-like Cal 12.2b from Californiconus californicus (California cone).